A 391-amino-acid chain; its full sequence is MIITSLLDTDLYKFSMMQVVLHHFPAAQVEYRYKCRTPGVNLRPYLDEIRAEVHALCQLRFTEEELQYLGSLRFIKSDFVDFLGLFHLPERCISIGEGEQPGEIAITVAGPWLHTILFEIPVLAIVNEVYFRNTRRHPDWDEGRQRLQSKMHLVLDDPALADFRVAEYGTRRRFSKLWHEEIVSTMKAQMGAHFAGTSNVLLAMRHNVLPLGTMGHEYLQACQALGPRLRDSQVFALEVWAKEYRGDLGIALSDVYGMDAFLRDFDMYFCKLFDGARHDSGDPFVWGERLLEHYRNNRVDPRAKTLVFSDSLTFPRAIELARQFAGRCKVSFGIGTNLTNDLGHEPLQIVMKMVRCNGQPVAKVSDAPEKTMCDDPAYLAYLRQVFQLPPA.

A Phosphohistidine; by autocatalysis modification is found at H216.

Belongs to the NAPRTase family. Post-translationally, transiently phosphorylated on a His residue during the reaction cycle. Phosphorylation strongly increases the affinity for substrates and increases the rate of nicotinate D-ribonucleotide production. Dephosphorylation regenerates the low-affinity form of the enzyme, leading to product release.

It carries out the reaction nicotinate + 5-phospho-alpha-D-ribose 1-diphosphate + ATP + H2O = nicotinate beta-D-ribonucleotide + ADP + phosphate + diphosphate. It functions in the pathway cofactor biosynthesis; NAD(+) biosynthesis; nicotinate D-ribonucleotide from nicotinate: step 1/1. In terms of biological role, catalyzes the synthesis of beta-nicotinate D-ribonucleotide from nicotinate and 5-phospho-D-ribose 1-phosphate at the expense of ATP. The sequence is that of Nicotinate phosphoribosyltransferase from Bordetella petrii (strain ATCC BAA-461 / DSM 12804 / CCUG 43448).